A 353-amino-acid polypeptide reads, in one-letter code: Photosystem II protein D1 (353 aa).

Position 2 is an N-acetylthreonine (threonine 2). Threonine 2 carries the phosphothreonine modification. 3 consecutive transmembrane segments (helical) span residues 29 to 46, 118 to 133, and 142 to 156; these read YIGWFGVLMIPTLLTATS, HFLLGVACYMGREWEL, and WIAVAYSAPVAAATA. Histidine 118 is a binding site for chlorophyll a. A pheophytin a-binding site is contributed by tyrosine 126. [CaMn4O5] cluster is bound by residues aspartate 170 and glutamate 189. The helical transmembrane segment at 197-218 threads the bilayer; sequence FHMLGVAGVFGGSLFSAMHGSL. Chlorophyll a is bound at residue histidine 198. A quinone is bound by residues histidine 215 and 264–265; that span reads SF. Histidine 215 serves as a coordination point for Fe cation. A Fe cation-binding site is contributed by histidine 272. The helical transmembrane segment at 274–288 threads the bilayer; the sequence is FLAAWPVVGIWFTAL. [CaMn4O5] cluster is bound by residues histidine 332, glutamate 333, aspartate 342, and alanine 344. Residues 345 to 353 constitute a propeptide that is removed on maturation; that stretch reads AIEAPSTNG.

This sequence belongs to the reaction center PufL/M/PsbA/D family. As to quaternary structure, PSII is composed of 1 copy each of membrane proteins PsbA, PsbB, PsbC, PsbD, PsbE, PsbF, PsbH, PsbI, PsbJ, PsbK, PsbL, PsbM, PsbT, PsbX, PsbY, PsbZ, Psb30/Ycf12, at least 3 peripheral proteins of the oxygen-evolving complex and a large number of cofactors. It forms dimeric complexes. The cofactor is The D1/D2 heterodimer binds P680, chlorophylls that are the primary electron donor of PSII, and subsequent electron acceptors. It shares a non-heme iron and each subunit binds pheophytin, quinone, additional chlorophylls, carotenoids and lipids. D1 provides most of the ligands for the Mn4-Ca-O5 cluster of the oxygen-evolving complex (OEC). There is also a Cl(-1) ion associated with D1 and D2, which is required for oxygen evolution. The PSII complex binds additional chlorophylls, carotenoids and specific lipids.. In terms of processing, tyr-161 forms a radical intermediate that is referred to as redox-active TyrZ, YZ or Y-Z. C-terminally processed by CTPA; processing is essential to allow assembly of the oxygen-evolving complex and thus photosynthetic growth.

It localises to the plastid. The protein localises to the chloroplast thylakoid membrane. It carries out the reaction 2 a plastoquinone + 4 hnu + 2 H2O = 2 a plastoquinol + O2. Photosystem II (PSII) is a light-driven water:plastoquinone oxidoreductase that uses light energy to abstract electrons from H(2)O, generating O(2) and a proton gradient subsequently used for ATP formation. It consists of a core antenna complex that captures photons, and an electron transfer chain that converts photonic excitation into a charge separation. The D1/D2 (PsbA/PsbD) reaction center heterodimer binds P680, the primary electron donor of PSII as well as several subsequent electron acceptors. This Citrus sinensis (Sweet orange) protein is Photosystem II protein D1.